The sequence spans 317 residues: Melanocyte-stimulating hormone receptor (317 aa).

Residues 1 to 37 are Extracellular-facing; it reads MPMQEPQRRLLDPFNSTRTGTPHLKLSANQTGPWCLH. N-linked (GlcNAc...) asparagine glycosylation is found at N15 and N29. A helical transmembrane segment spans residues 38 to 63; it reads VSIPDGLFLSLGLVSLVENVLVVISI. At 64–72 the chain is on the cytoplasmic side; the sequence is AKNRNLHSP. Residues 73-93 traverse the membrane as a helical segment; it reads MYYFICCLALSDLLVSVSIVL. Residues 94-118 are Extracellular-facing; the sequence is ETTLILVLEAGALATRVTVVQQLDN. A helical membrane pass occupies residues 119–140; the sequence is VIDVLICGSMVSSLCFLGAIAV. Residues 141–163 lie on the Cytoplasmic side of the membrane; the sequence is DRYISIFYALRYHSIVTLPRARW. A helical membrane pass occupies residues 164–183; sequence AIVAIWVASISSSTLFVAYY. The Extracellular portion of the chain corresponds to 184–191; the sequence is NHTAVLLC. Residues 192–211 form a helical membrane-spanning segment; it reads LVTFFLATLALMAVLYVHML. At 212 to 240 the chain is on the cytoplasmic side; the sequence is ARAHQHAQAIAQLHKRQHLVHQGFRLKGA. The chain crosses the membrane as a helical span at residues 241-266; it reads ATLTILLGIFFLCWGPFFLYLTLIVL. Residues 267 to 279 lie on the Extracellular side of the membrane; the sequence is CPKHPTCSCFFKN. A helical membrane pass occupies residues 280–300; sequence LNLFLALIIFNSIVDPLIYAF. At 301 to 317 the chain is on the cytoplasmic side; the sequence is RSQELRMTLKEVLLCSW. The S-palmitoyl cysteine moiety is linked to residue C315.

The protein belongs to the G-protein coupled receptor 1 family. Interacts with MGRN1, but does not undergo MGRN1-mediated ubiquitination; this interaction competes with GNAS-binding and thus inhibits agonist-induced cAMP production. Interacts with OPN3; the interaction results in a decrease in MC1R-mediated cAMP signaling and ultimately a decrease in melanin production in melanocytes.

The protein localises to the cell membrane. Its function is as follows. Receptor for MSH (alpha, beta and gamma) and ACTH. The activity of this receptor is mediated by G proteins which activate adenylate cyclase. Mediates melanogenesis, the production of eumelanin (black/brown) and phaeomelanin (red/yellow), via regulation of cAMP signaling in melanocytes. The chain is Melanocyte-stimulating hormone receptor (MC1R) from Chaetodipus baileyi (Bailey's pocket mouse).